Reading from the N-terminus, the 256-residue chain is 5-oxoprolinase subunit A (256 aa).

This sequence belongs to the LamB/PxpA family. Forms a complex composed of PxpA, PxpB and PxpC.

The catalysed reaction is 5-oxo-L-proline + ATP + 2 H2O = L-glutamate + ADP + phosphate + H(+). Its function is as follows. Catalyzes the cleavage of 5-oxoproline to form L-glutamate coupled to the hydrolysis of ATP to ADP and inorganic phosphate. This is 5-oxoprolinase subunit A from Cutibacterium acnes (strain DSM 16379 / KPA171202) (Propionibacterium acnes).